Consider the following 534-residue polypeptide: Pentatricopeptide repeat-containing protein At2g20540 (534 aa).

PPR repeat units lie at residues 41 to 71 (SSFM…VSNP), 72 to 106 (NVFL…SFEL), 108 to 142 (DRFT…GPRF), 143 to 173 (HVVT…MYER), 174 to 208 (DVIS…TIVS), 209 to 239 (WTAM…GIEP), 240 to 274 (DEIS…GFLK), 275 to 305 (QTGV…MEGK), 306 to 340 (DVIS…KVKP), 341 to 371 (NGIT…MRQD), and 377 to 407 (KIEH…MPMK). The type E motif stretch occupies residues 412–487 (IWGSLLSSCR…TPGGSLIEVN (76 aa)). A type E(+) motif region spans residues 488–518 (NIVQEFVSGDNSKPFWTEISIVLQLFTSHQD).

This sequence belongs to the PPR family. PCMP-E subfamily.

The polypeptide is Pentatricopeptide repeat-containing protein At2g20540 (PCMP-E78) (Arabidopsis thaliana (Mouse-ear cress)).